The sequence spans 447 residues: MDKSEMDKINGTNPESTDQAPSLASRPDEFEEEESLVTPDALSARIGGFQIYAGSVNWGVFGSMKIVFLKSKLNVLIPCGFLAIFLNYMTQRYGWVFPLSMLGIIPLAERLGFATDWQISCEVGRLLNSAFGNATELIISIHALSRGKLHVVQQCLLGSILSNLLLVLGSAFFSGGLACGKTMQTFSKADAVVNSGLLLMAVMGLLIPAALHYTHSEAQFGKSELALSRFSSCIMLVAYASYLYFQLSNNRRRNEANVYPCMPLIKRRIQDDVDGNDDEVPEISKREAISWIAIFIAWISMLSYYLVDAIDGASKAWNIPVAFISVVLLPVVGNSAGHANAVMFAVKDKLDISLGVAIGSSIQISMFGIPFCVVMGWMMGKPMDLNFHLFETASLLTTVLVVAFLLQDGTSNCVKGLMLFLCYLIVAASFYVHADPNSKASEKPPQN.

The disordered stretch occupies residues 1 to 29 (MDKSEMDKINGTNPESTDQAPSLASRPDE). The Cytoplasmic segment spans residues 1-65 (MDKSEMDKIN…VNWGVFGSMK (65 aa)). Over residues 10-22 (NGTNPESTDQAPS) the composition is skewed to polar residues. A helical transmembrane segment spans residues 66–86 (IVFLKSKLNVLIPCGFLAIFL). Residues 87–93 (NYMTQRY) lie on the Extracellular side of the membrane. The chain crosses the membrane as a helical span at residues 94 to 114 (GWVFPLSMLGIIPLAERLGFA). Over 115–122 (TDWQISCE) the chain is Cytoplasmic. The chain crosses the membrane as a helical span at residues 123-143 (VGRLLNSAFGNATELIISIHA). Positions 132–167 (GNATELIISIHALSRGKLHVVQQCLLGSILSNLLLV) are cation selection. Over 144-159 (LSRGKLHVVQQCLLGS) the chain is Extracellular. A helical transmembrane segment spans residues 160–180 (ILSNLLLVLGSAFFSGGLACG). At 181–190 (KTMQTFSKAD) the chain is on the cytoplasmic side. The chain crosses the membrane as a helical span at residues 191–211 (AVVNSGLLLMAVMGLLIPAAL). The Extracellular segment spans residues 212 to 224 (HYTHSEAQFGKSE). Residues 225–245 (LALSRFSSCIMLVAYASYLYF) traverse the membrane as a helical segment. The Cytoplasmic segment spans residues 246–286 (QLSNNRRRNEANVYPCMPLIKRRIQDDVDGNDDEVPEISKR). A helical membrane pass occupies residues 287-307 (EAISWIAIFIAWISMLSYYLV). Topologically, residues 308–318 (DAIDGASKAWN) are extracellular. Residues 319–339 (IPVAFISVVLLPVVGNSAGHA) form a helical membrane-spanning segment. Residues 333–368 (GNSAGHANAVMFAVKDKLDISLGVAIGSSIQISMFG) form a cation selection region. Residues 340–353 (NAVMFAVKDKLDIS) lie on the Cytoplasmic side of the membrane. A helical transmembrane segment spans residues 354–374 (LGVAIGSSIQISMFGIPFCVV). The Extracellular portion of the chain corresponds to 375-384 (MGWMMGKPMD). Residues 385–405 (LNFHLFETASLLTTVLVVAFL) form a helical membrane-spanning segment. Residues 406 to 413 (LQDGTSNC) lie on the Cytoplasmic side of the membrane. A helical transmembrane segment spans residues 414–434 (VKGLMLFLCYLIVAASFYVHA). Residues 435 to 447 (DPNSKASEKPPQN) lie on the Extracellular side of the membrane.

It belongs to the Ca(2+):cation antiporter (CaCA) (TC 2.A.19) family. Cation/proton exchanger (CAX) subfamily.

Its subcellular location is the vacuole membrane. In terms of biological role, vacuolar cation/proton exchanger (CAX). Translocates Ca(2+) and other metal ions into vacuoles using the proton gradient formed by H(+)-ATPase and H(+)-pyrophosphatase. The polypeptide is Putative vacuolar cation/proton exchanger 4 (Oryza sativa subsp. japonica (Rice)).